The chain runs to 348 residues: MNPIIISMIGFTIILGTTIVLMSSHWFMIWIGFEMNMLAIIPVLMKSHHPRSTEASTKYFLTQTTASMLMLLSVMINLIYTGQWTAMKLANPTASTIMTLSLAMKLGLSPFHFWVPEVTQGIPLTSGLILLTWQKLAPLSVLYIASPNLNMTMLLTMSILSVVMGGWGGLNQTQLRKILAFSSIAHMGWMTAIIMFNPTLTLLNLLLYILMTTTIFMILIFTKSTTTLSISYMWNKTPIMTVIMLTILMSLGGLPPLSGFMPKWMIIQELTKNNNIALALIMAMSALLNLYFYMRLMYATTLTMFPSSNNIKMKWYYTNNLPTKYLPTLTIMSTLLLPLTPMMMMLLN.

10 helical membrane passes run proline 3–serine 23, histidine 25–methionine 45, tyrosine 59–isoleucine 79, threonine 93–valine 115, leucine 149–glycine 169, isoleucine 178–proline 198, threonine 201–phenylalanine 221, isoleucine 239–glycine 259, isoleucine 276–leucine 296, and leucine 326–leucine 346.

Belongs to the complex I subunit 2 family. In terms of assembly, core subunit of respiratory chain NADH dehydrogenase (Complex I) which is composed of 45 different subunits. Interacts with TMEM242.

The protein localises to the mitochondrion inner membrane. The enzyme catalyses a ubiquinone + NADH + 5 H(+)(in) = a ubiquinol + NAD(+) + 4 H(+)(out). Its function is as follows. Core subunit of the mitochondrial membrane respiratory chain NADH dehydrogenase (Complex I) which catalyzes electron transfer from NADH through the respiratory chain, using ubiquinone as an electron acceptor. Essential for the catalytic activity and assembly of complex I. In Thyroptera tricolor (Spix's disk-winged bat), this protein is NADH-ubiquinone oxidoreductase chain 2.